The following is a 455-amino-acid chain: Argininosuccinate lyase (455 aa).

Belongs to the lyase 1 family. Argininosuccinate lyase subfamily.

The protein localises to the cytoplasm. It catalyses the reaction 2-(N(omega)-L-arginino)succinate = fumarate + L-arginine. The protein operates within amino-acid biosynthesis; L-arginine biosynthesis; L-arginine from L-ornithine and carbamoyl phosphate: step 3/3. This Shewanella halifaxensis (strain HAW-EB4) protein is Argininosuccinate lyase.